The following is a 422-amino-acid chain: F-box protein At3g12350 (422 aa).

The F-box domain occupies 5-52; sequence ALPFCEIPEDLQLRILSLLTPAEISSFACTSKRFASLCQEDGKIWHVM. 2 stretches are compositionally biased toward basic and acidic residues: residues 197–207 and 242–252; these read NNRREDQRSSG and KEKERQASRTK. Disordered stretches follow at residues 197 to 216 and 226 to 252; these read NNRREDQRSSGDESDDLISS and LANKTSPGGDRRRQKRKEKERQASRTK.

In Arabidopsis thaliana (Mouse-ear cress), this protein is F-box protein At3g12350.